Consider the following 748-residue polypeptide: Catalase-peroxidase (748 aa).

Basic and acidic residues predominate over residues 1 to 14 (MTDTSDARPPHSDA). The segment at 1-40 (MTDTSDARPPHSDAKTASNSESENPAIDSPEPKSHAPLTN) is disordered. Residues 112–239 (WHAAGTYRIF…FGATTMGLIY (128 aa)) constitute a cross-link (tryptophyl-tyrosyl-methioninium (Trp-Tyr) (with M-265)). H113 (proton acceptor) is an active-site residue. The segment at residues 239 to 265 (YVNPEGPEGKPDPLAAAHDIRETFGRM) is a cross-link (tryptophyl-tyrosyl-methioninium (Tyr-Met) (with W-112)). Heme b is bound at residue H280.

It belongs to the peroxidase family. Peroxidase/catalase subfamily. As to quaternary structure, homodimer or homotetramer. The cofactor is heme b. Post-translationally, formation of the three residue Trp-Tyr-Met cross-link is important for the catalase, but not the peroxidase activity of the enzyme.

The catalysed reaction is H2O2 + AH2 = A + 2 H2O. The enzyme catalyses 2 H2O2 = O2 + 2 H2O. In terms of biological role, bifunctional enzyme with both catalase and broad-spectrum peroxidase activity. The protein is Catalase-peroxidase of Mycolicibacterium gilvum (strain PYR-GCK) (Mycobacterium gilvum (strain PYR-GCK)).